The sequence spans 145 residues: Hemoglobin fetal subunit beta (145 aa).

The Globin domain occupies 1 to 145; that stretch reads MLSAEEKASV…VANALAHRYH (145 aa). Residues histidine 62 and histidine 91 each coordinate heme b.

This sequence belongs to the globin family. In terms of assembly, heterotetramer of two alpha chains and two beta chains. As to expression, red blood cells.

Involved in oxygen transport from the lung to the various peripheral tissues. This Capra hircus (Goat) protein is Hemoglobin fetal subunit beta.